A 244-amino-acid polypeptide reads, in one-letter code: MTEMILELLPAVDVADGQAVRLVQGEAGSETSYGAPIDAALAWQQDGAEWVHLVDLDAAFDRGSNLALLRDVVAQLNVKVELSGGIRDDASLEGALKLGAERVNLGTAALEDPVWTARAIERFGDKIAVGLDVRGTTLAARGWTKDGGDLWEVLARLEDAGCARYVVTDVTKDGTLRGPNIELLQQMLERTDRPVVASGGVSSLDDLVQLRALVPHGLEGAIVGKALYAGAFTLPEALDVAGRR.

The active-site Proton acceptor is the Asp13. The Proton donor role is filled by Asp132.

The protein belongs to the HisA/HisF family.

It is found in the cytoplasm. The catalysed reaction is 1-(5-phospho-beta-D-ribosyl)-5-[(5-phospho-beta-D-ribosylamino)methylideneamino]imidazole-4-carboxamide = 5-[(5-phospho-1-deoxy-D-ribulos-1-ylimino)methylamino]-1-(5-phospho-beta-D-ribosyl)imidazole-4-carboxamide. It participates in amino-acid biosynthesis; L-histidine biosynthesis; L-histidine from 5-phospho-alpha-D-ribose 1-diphosphate: step 4/9. The protein is 1-(5-phosphoribosyl)-5-[(5-phosphoribosylamino)methylideneamino] imidazole-4-carboxamide isomerase of Renibacterium salmoninarum (strain ATCC 33209 / DSM 20767 / JCM 11484 / NBRC 15589 / NCIMB 2235).